The chain runs to 455 residues: Beta-cyclopiazonate dehydrogenase (455 aa).

A signal peptide spans 1-25; that stretch reads MAVRIARFLGLSTVAYLALANGIDA.

Belongs to the beta-cyclopiazonate dehydrogenase family. The cofactor is FAD.

It carries out the reaction beta-cyclopiazonate + A = alpha-cyclopiazonate + AH2. In terms of biological role, beta-cyclopiazonate dehydrogenase involved in the synthesis of the fungal neurotoxin alpha-cyclopiazonic acid (CPA). CpaO carries out the dehydrogenation of beta-CPA to yield an unstable enimine product, which is captured by intramolecular cyclization to create the pentacyclic fused scaffold of alpha-cyclopiazonate. This chain is Beta-cyclopiazonate dehydrogenase, found in Aspergillus oryzae (strain ATCC 42149 / RIB 40) (Yellow koji mold).